The following is a 164-amino-acid chain: SsrA-binding protein (164 aa).

Residues 143–164 (HDKRQDEKQKSIKKEINSVLKR) form a disordered region. The span at 145 to 158 (KRQDEKQKSIKKEI) shows a compositional bias: basic and acidic residues.

Belongs to the SmpB family.

It is found in the cytoplasm. Functionally, required for rescue of stalled ribosomes mediated by trans-translation. Binds to transfer-messenger RNA (tmRNA), required for stable association of tmRNA with ribosomes. tmRNA and SmpB together mimic tRNA shape, replacing the anticodon stem-loop with SmpB. tmRNA is encoded by the ssrA gene; the 2 termini fold to resemble tRNA(Ala) and it encodes a 'tag peptide', a short internal open reading frame. During trans-translation Ala-aminoacylated tmRNA acts like a tRNA, entering the A-site of stalled ribosomes, displacing the stalled mRNA. The ribosome then switches to translate the ORF on the tmRNA; the nascent peptide is terminated with the 'tag peptide' encoded by the tmRNA and targeted for degradation. The ribosome is freed to recommence translation, which seems to be the essential function of trans-translation. The chain is SsrA-binding protein from Prochlorococcus marinus (strain MIT 9312).